A 646-amino-acid polypeptide reads, in one-letter code: Serine/threonine-protein kinase max-2 (646 aa).

Residues 19 to 40 form a disordered region; that stretch reads FSPSDKDKDRDDEMKPSSSAMD. The segment covering 22–33 has biased composition (basic and acidic residues); sequence SDKDKDRDDEMK. Residues 41-54 enclose the CRIB domain; sequence ISQPYNTVHRVHVG. A disordered region spans residues 136 to 345; the sequence is LQCSNGSATS…PPPPEEPPVR (210 aa). Composition is skewed to low complexity over residues 142 to 157 and 167 to 180; these read SATS…SSSA and LSTA…LSLS. Polar residues predominate over residues 196–205; that stretch reads SAPQLKTFTG. The span at 214–223 shows a compositional bias: pro residues; the sequence is SPFPPQPPVL. The span at 229 to 245 shows a compositional bias: low complexity; it reads TASAVATTTTNPTTSNG. Over residues 246–262 the composition is skewed to pro residues; sequence APPPVPGSKGPPVPPKP. Composition is skewed to low complexity over residues 273 to 307 and 323 to 334; these read SSGC…DGDV and KNGNTTTNKTTV. A Protein kinase domain is found at 376-627; that stretch reads YEMKKQIGVG…TTELLAHPFL (252 aa). Residues 382-390 and lysine 405 each bind ATP; that span reads IGVGASGTV. The active-site Proton acceptor is the aspartate 496.

Belongs to the protein kinase superfamily. STE Ser/Thr protein kinase family. STE20 subfamily. In terms of assembly, interacts with mlk-1; the interaction is independent of max-2 and mlk-1 kinase activities. Interacts with mig-2 (GTP-bound form). It depends on Mg(2+) as a cofactor.

It is found in the perikaryon. It localises to the cell projection. The protein localises to the dendrite. The protein resides in the cytoplasm. It carries out the reaction L-seryl-[protein] + ATP = O-phospho-L-seryl-[protein] + ADP + H(+). It catalyses the reaction L-threonyl-[protein] + ATP = O-phospho-L-threonyl-[protein] + ADP + H(+). In terms of biological role, serine/threonine-protein kinase, which phosphorylates mlk-1. Involved in the stress response to heavy metals by activating the mlk-1/mek-1/kgb-1 pathway. In ventral cord commissural motoneurons, required for dorsal axon guidance downstream of unc-6/netrin repulsion receptor unc-5 and probably of Rho GTPases ced-10 and mig-2. Plays a redundant role with mig-10 in orientating axonal growth of HSN neurons. Plays a redundant role with pak-1 in P neuroblast migration and in distal tip cell (DTC)-mediated guidance of gonad elongation probably downstream of Rho GTPases. In association with pak-2, plays a role in embryogenesis. In association with pak-1, may be involved in spermatogenesis. The chain is Serine/threonine-protein kinase max-2 from Caenorhabditis elegans.